We begin with the raw amino-acid sequence, 273 residues long: MTDSTIRIAIVGAGGRMGRQLIQAVTQMEGVVLGAAIERKGSTLVGSDAGELAGVGLLNVIVGDDLSQLTDNFDVLIDFTRPEGTLEHLAICRQHRKAMVIGTTGFDEAGKAAISEAAADIGIVFAANFSVGVNVVLKLLEKAAKVMGDYTDIEIIEAHHRHKVDAPSGTALAMGEAIADAMGRSLKDCAVYSREGYTGERKPGTIGFATVRAGDIVGEHTAMFADIGERVEITHKATSRMTFAHGAVKSAIWLGKHDNGLFDMRDVLNLNEL.

NAD(+) is bound by residues 12–17 (GAGGRM) and glutamate 38. Arginine 39 is an NADP(+) binding site. Residues 102 to 104 (GTT) and 126 to 129 (AANF) each bind NAD(+). Histidine 159 acts as the Proton donor/acceptor in catalysis. Histidine 160 provides a ligand contact to (S)-2,3,4,5-tetrahydrodipicolinate. The active-site Proton donor is lysine 163. 169–170 (GT) contacts (S)-2,3,4,5-tetrahydrodipicolinate.

This sequence belongs to the DapB family. In terms of assembly, homotetramer.

It localises to the cytoplasm. The enzyme catalyses (S)-2,3,4,5-tetrahydrodipicolinate + NAD(+) + H2O = (2S,4S)-4-hydroxy-2,3,4,5-tetrahydrodipicolinate + NADH + H(+). It carries out the reaction (S)-2,3,4,5-tetrahydrodipicolinate + NADP(+) + H2O = (2S,4S)-4-hydroxy-2,3,4,5-tetrahydrodipicolinate + NADPH + H(+). The protein operates within amino-acid biosynthesis; L-lysine biosynthesis via DAP pathway; (S)-tetrahydrodipicolinate from L-aspartate: step 4/4. Functionally, catalyzes the conversion of 4-hydroxy-tetrahydrodipicolinate (HTPA) to tetrahydrodipicolinate. The polypeptide is 4-hydroxy-tetrahydrodipicolinate reductase (Yersinia pestis bv. Antiqua (strain Antiqua)).